The primary structure comprises 854 residues: MMAYSDTTMMSDDIDWLRSHRGVCKVDLYNPEGQQDQDRKVICFVDVSTLNVEDKDYKDAASSSSEGNLNLGSLEEKEIIVIKDTEKKDQSKTEGSVCLFKQAPSDPVSVLNWLLSDLQKYALGFQHALSPSTSTCKHKVGDTEGEYHRASSENCYSVYADQVNIDYLMNRPQNLRLEMTAAKNTNNNQSPSAPPAKPPSTQRAVISPDGECSIDDLSFYVNRLSSLVIQMAHKEIKEKLEGKSKCLHHSICPSPGNKERISPRTPASKIASEMAYEAVELTAAEMRGTGEESREGGQKSFLYSELSNKSKSGDKQMSQRESKEFADSISKGLMVYANQVASDMMVSLMKTLKVHSSGKPIPASVVLKRVLLRHTKEIVSDLIDSCMKNLHNITGVLMTDSDFVSAVKRNLFNQWKQNATDIMEAMLKRLVSALIGEEKETKSQSLSYASLKAGSHDPKCRNQSLEFSTMKAEMKERDKGKMKSDPCKSLTSAEKVGEHILKEGLTIWNQKQGNSCKVATKACSNKDEKGEKINASTDSLAKDLIVSALKLIQYHLTQQTKGKDTCEEDCPGSTMGYMAQSTQYEKCGGGQSAKALSVKQLESHRAPGPSTCQKENQHLDSQKMDMSNIVLMLIQKLLNENPFKCEDPCEGENKCSEPRASKAASMSNRSDKAEEQCQEHQELDCTSGMKQANGQFIDKLVESVMKLCLIMAKYSNDGAALAELEEQAASANKPNFRGTRCIHSGAMPQNYQDSLGHEVIVNNQCSTNSLQKQLQAVLQWIAASQFNVPMLYFMGDKDGQLEKLPQVSAKAAEKGYSVGGLLQEVMKFAKERQPDEAVGKVARKQLLDWLLANL.

Residues 1–188 constitute a propeptide that is removed on maturation; sequence MMAYSDTTMM…MTAAKNTNNN (188 aa). 6 positions are modified to phosphoserine: serine 96, serine 130, serine 190, serine 213, serine 226, and serine 272. Positions 184 to 207 are disordered; it reads NTNNNQSPSAPPAKPPSTQRAVIS. The segment at 219–232 is PKA-RI and PKA-RII subunit binding domain; sequence FYVNRLSSLVIQMA. Residues 287 to 323 form a disordered region; the sequence is RGTGEESREGGQKSFLYSELSNKSKSGDKQMSQRESK. A compositionally biased stretch (basic and acidic residues) spans 288–297; the sequence is GTGEESREGG. Serine 300 carries the phosphoserine modification. Tyrosine 303 carries the post-translational modification Phosphotyrosine. Serine 304 and serine 307 each carry phosphoserine. A compositionally biased stretch (basic and acidic residues) spans 311 to 323; the sequence is KSGDKQMSQRESK. The tract at residues 336–345 is PKA-RI-alpha subunit binding domain; the sequence is YANQVASDMM. Residues serine 342, serine 432, serine 443, serine 445, serine 447, serine 450, serine 464, and serine 492 each carry the phosphoserine modification. Threonine 506 is subject to Phosphothreonine. Phosphoserine occurs at positions 536, 581, 627, and 703.

This sequence belongs to the AKAP110 family. As to quaternary structure, interacts with PRKAR1A and PRKAR2A. Interacts with ENO4. Interacts with QRICH2. Post-translationally, phosphorylated by STK33 during sperm flagella assembly. Testis specific; only expressed in round spermatids.

Its subcellular location is the cell projection. The protein localises to the cilium. The protein resides in the flagellum. Functionally, major structural component of sperm fibrous sheath. Plays a role in sperm motility. This chain is A-kinase anchor protein 4, found in Homo sapiens (Human).